The primary structure comprises 277 residues: Sulfate transport system permease protein CysT (277 aa).

Transmembrane regions (helical) follow at residues 17–37 (LGTS…ALVM), 64–84 (LLAA…MAWI), 99–119 (LMDL…ASLF), 136–156 (VTYT…PFVV), 188–205 (VVLP…ALSF), 215–235 (VIFI…MIFV), and 243–263 (PAAS…LFSI). Residues 60 to 263 (YKVTLLAAFV…AASLLLLFSI (204 aa)) form the ABC transmembrane type-1 domain.

This sequence belongs to the binding-protein-dependent transport system permease family. CysTW subfamily. In terms of assembly, the complex is composed of two ATP-binding proteins (CysA), two transmembrane proteins (CysT and CysW) and a solute-binding protein (CysP).

The protein localises to the cell inner membrane. Part of the ABC transporter complex CysAWTP (TC 3.A.1.6.1) involved in sulfate/thiosulfate import. Probably responsible for the translocation of the substrate across the membrane. The chain is Sulfate transport system permease protein CysT (cysU) from Salmonella typhimurium (strain LT2 / SGSC1412 / ATCC 700720).